A 402-amino-acid polypeptide reads, in one-letter code: Arginine deiminase (402 aa).

Cys-392 serves as the catalytic Amidino-cysteine intermediate.

The protein belongs to the arginine deiminase family.

The protein resides in the cytoplasm. It catalyses the reaction L-arginine + H2O = L-citrulline + NH4(+). It functions in the pathway amino-acid degradation; L-arginine degradation via ADI pathway; carbamoyl phosphate from L-arginine: step 1/2. The chain is Arginine deiminase from Mycobacterium avium (strain 104).